The primary structure comprises 183 residues: ATP synthase subunit delta (183 aa).

It belongs to the ATPase delta chain family. In terms of assembly, F-type ATPases have 2 components, F(1) - the catalytic core - and F(0) - the membrane proton channel. F(1) has five subunits: alpha(3), beta(3), gamma(1), delta(1), epsilon(1). F(0) has three main subunits: a(1), b(2) and c(10-14). The alpha and beta chains form an alternating ring which encloses part of the gamma chain. F(1) is attached to F(0) by a central stalk formed by the gamma and epsilon chains, while a peripheral stalk is formed by the delta and b chains.

Its subcellular location is the cell membrane. Its function is as follows. F(1)F(0) ATP synthase produces ATP from ADP in the presence of a proton or sodium gradient. F-type ATPases consist of two structural domains, F(1) containing the extramembraneous catalytic core and F(0) containing the membrane proton channel, linked together by a central stalk and a peripheral stalk. During catalysis, ATP synthesis in the catalytic domain of F(1) is coupled via a rotary mechanism of the central stalk subunits to proton translocation. In terms of biological role, this protein is part of the stalk that links CF(0) to CF(1). It either transmits conformational changes from CF(0) to CF(1) or is implicated in proton conduction. The sequence is that of ATP synthase subunit delta from Halalkalibacterium halodurans (strain ATCC BAA-125 / DSM 18197 / FERM 7344 / JCM 9153 / C-125) (Bacillus halodurans).